Here is a 213-residue protein sequence, read N- to C-terminus: MNYSADSGNTVYVGNIDPRITKEQLYELFIQINPVLRIKYPKDKVLQAYQGYAFIEFYNQGDAQYAIKIMNNTVRLYDRLIKVRQVTNSTGTTNLPSNISKDMILPIAKLFIKNLADSIDSDQLVKIFNKFGKLIREPEIFYLSNGKLKCAYVYFEDFEKADLAIKSLNNQLVANNRITVDYAFKENGKGNAKYGDDVDRLLNKEALKHNMLK.

2 consecutive RRM domains span residues 9–88 (NTVY…QVTN) and 108–185 (AKLF…YAFK).

As to quaternary structure, interacts with RDS3.

It localises to the nucleus. Functionally, possible SF3b-like factor. The protein is Protein HSH49 (HSH49) of Saccharomyces cerevisiae (strain ATCC 204508 / S288c) (Baker's yeast).